A 151-amino-acid chain; its full sequence is Ribosome maturation factor RimP (151 aa).

This sequence belongs to the RimP family.

The protein resides in the cytoplasm. Its function is as follows. Required for maturation of 30S ribosomal subunits. The polypeptide is Ribosome maturation factor RimP (Persephonella marina (strain DSM 14350 / EX-H1)).